The sequence spans 166 residues: Phospholipase A2 inhibitor (166 aa).

The first 19 residues, 1-19 (MRLILLSGLLLLGIFLANG), serve as a signal peptide directing secretion. The C-type lectin domain maps to 46 to 161 (LRGAFLTVYK…CDDNLLVVCE (116 aa)). N-linked (GlcNAc...) asparagine glycans are attached at residues asparagine 61 and asparagine 122. Disulfide bonds link cysteine 83/cysteine 160 and cysteine 138/cysteine 152.

This sequence belongs to the alpha-type phospholipase A2 inhibitor family. In terms of assembly, homotrimer; non-covalently linked. In terms of tissue distribution, expressed by the liver.

The protein resides in the secreted. This phospholipase A2 inhibitor binds directly phospholipase A2 in the presence or absence of calcium. The polypeptide is Phospholipase A2 inhibitor (Bothrops alternatus (Urutu)).